The primary structure comprises 160 residues: Serine-protein kinase RsbW (160 aa).

In terms of assembly, homodimer. In stressed cells, forms a complex with RsbV. The predominant form of this complex has a stoichiometry of 2:2 (one dimer of RsbW is bound by two monomers of RsbV). In unstressed cells, forms a 2:1 complex with sigma-B.

It catalyses the reaction L-seryl-[protein] + ATP = O-phospho-L-seryl-[protein] + ADP + H(+). It carries out the reaction L-threonyl-[protein] + ATP = O-phospho-L-threonyl-[protein] + ADP + H(+). The higher affinity of RsbW for RsbV than for sigma-B, rather than a difference in the concentrations of RsbV and sigma-B, is the driving force that is responsible for the switch of RsbW to non-phosphorylated RsbV. The kinase activity of RsbW is directly regulated by changes in the ATP/ADP ratio. Functionally, negative regulator of sigma-B activity. Phosphorylates and inactivates its specific antagonist protein, RsbV. Upon phosphorylation of RsbV, RsbW is released and binds to sigma-B, thereby blocking its ability to form an RNA polymerase holoenzyme (E-sigma-B). This Bacillus subtilis (strain 168) protein is Serine-protein kinase RsbW (rsbW).